Consider the following 194-residue polypeptide: Acid tolerance regulatory protein ActR (194 aa).

The Response regulatory domain maps to 24–138 (SLLIVDDDTA…DILAALIQRP (115 aa)). A 4-aspartylphosphate modification is found at D73.

Phosphorylated by ActS.

Functionally, member of the two-component regulatory system ActS/ActR acting in acid tolerance. These data implicate that a two-component sensor may be involved in pH sensing and/or response. This Sinorhizobium medicae (strain WSM419) (Ensifer medicae) protein is Acid tolerance regulatory protein ActR (actR).